The chain runs to 67 residues: Large ribosomal subunit protein uL29 (67 aa).

This sequence belongs to the universal ribosomal protein uL29 family.

The sequence is that of Large ribosomal subunit protein uL29 from Solibacter usitatus (strain Ellin6076).